The following is a 146-amino-acid chain: UPF0306 protein HD_1359 (146 aa).

This sequence belongs to the UPF0306 family.

The protein is UPF0306 protein HD_1359 of Haemophilus ducreyi (strain 35000HP / ATCC 700724).